Here is a 246-residue protein sequence, read N- to C-terminus: MEISLLTDVGQKRTNNQDYVNHYVNRAGRTMIILADGMGGHRAGNIASEMAVTDLGVAWVDTQIDTVNEVREWFAHYLEIENQKIHQLGQDEAYRGMGTTLEVLAIIDNQAIYAHIGDSRIGLIRGEEYHQLTSDHSLVNELLKAGQLTPEEAEAHPQKNIITQSIGQKDEIQPDFGTVILESGDYLLLDSDGLTNMISGSEIRDIVTSDIPLADKTETLVRFANNAGGLDNITVALVSMNEEDAE.

A PPM-type phosphatase domain is found at 2-240; that stretch reads EISLLTDVGQ…DNITVALVSM (239 aa). Positions 36, 37, 192, and 231 each coordinate Mn(2+).

It belongs to the PP2C family. In terms of assembly, interacts with the kinase domain of StkP. It depends on Mn(2+) as a cofactor.

It is found in the cytoplasm. The enzyme catalyses O-phospho-L-seryl-[protein] + H2O = L-seryl-[protein] + phosphate. The catalysed reaction is O-phospho-L-threonyl-[protein] + H2O = L-threonyl-[protein] + phosphate. Phosphatase activity is inhibited by NaF but not by okadaic acid. Functionally, protein phosphatase able to dephosphorylate StkP-P and a phosphothreonine residue in a phosphopeptide synthetic substrate. PhpP and its cognate protein kinase StkP appear to constitute a functional signaling couple in vivo, PhpP's primary role probably being to control phosphorylation levels of StkP and of its targets (which include LocZ, DivIVA and KhpB (also called EloR/Jag)). PhpP thus performs an essential control of StkP activity. Overexpression confers an stkP deletion-like phenotype. This chain is Protein phosphatase PhpP (phpP), found in Streptococcus pneumoniae.